A 325-amino-acid polypeptide reads, in one-letter code: uncharacterized protein (325 aa).

The helical transmembrane segment at 67–87 threads the bilayer; it reads WIPFFLLFSSVVVLGGLWWLG.

Its subcellular location is the membrane. This is an uncharacterized protein from Synechocystis sp. (strain ATCC 27184 / PCC 6803 / Kazusa).